Here is a 511-residue protein sequence, read N- to C-terminus: Sodium/proline symporter (511 aa).

13 helical membrane passes run 16–36 (WQTYIMIAVYFLILMLLAFTY), 53–73 (IGPYITALSAGASDMSGWMIM), 84–104 (LSAMWITIGLTLGAYINYFVV), 138–158 (IISGLIIVVFFTLYTHSGFVS), 173–193 (FGLILVAFIVIFYTFFGGYLA), 199–219 (FFQGVIMLIAMVMVPIVAMMN), 239–259 (LFKGLSFIGIISLFSWGLGYF), 285–305 (ISWMAVGLLGAVAVGLTGIAF), 326–346 (VLFHPLVGGFLLAAILAAIMS), 380–400 (FVMIGRLSVLVVAIVAIAIAW), 409–429 (LVGNAWAGFGASFSPLVLFAL), 437–457 (AGAVSGMVSGALVVIVWIAWI), and 466–486 (IFGLYEIIPGFIVSVIVTYVV).

This sequence belongs to the sodium:solute symporter (SSF) (TC 2.A.21) family.

Its subcellular location is the cell membrane. The enzyme catalyses L-proline(in) + Na(+)(in) = L-proline(out) + Na(+)(out). Catalyzes the sodium-dependent uptake of extracellular L-proline. Since most S.aureus strains are L-proline auxotrophs, this transporter may aid the bacterial persistence during an infection of tissues with low proline concentrations. This is Sodium/proline symporter from Staphylococcus aureus.